A 301-amino-acid polypeptide reads, in one-letter code: MSNPELSSEKKASLVETLKNKLQALAEQHVDVLESLAPVVRKRVDVLIEIQSQHDELEAKFLEEKSALEAKYHKLYGPLYSKRSEIVSGVLEVEGETEEREEKGVPDFWLKAMKNNEILAEEIHESDEEALKYLKDIKWCRIDDLKGFKFEFFFDTNPFFKNQVLTKTYHMIDEDDEPILEKAIGTEIEWHPGNCLTQEVLTKESLESTKPITKTEEYESFFNFFSPPQVPEDDAKIDENTVEELQNQMERDYDIASTLRDKIIPHAVSWFTGEAVQDEDYGASWVDDEEDDDDEYSDEEA.

Residues 15–69 (VETLKNKLQALAEQHVDVLESLAPVVRKRVDVLIEIQSQHDELEAKFLEEKSALE) adopt a coiled-coil conformation. Positions 36–51 (LAPVVRKRVDVLIEIQ) match the Nuclear export signal motif. The segment at 279 to 301 (EDYGASWVDDEEDDDDEYSDEEA) is disordered. Phosphoserine; by CK2 is present on serine 297.

Belongs to the nucleosome assembly protein (NAP) family.

The protein localises to the nucleus. It is found in the cytoplasm. Its function is as follows. May modulate chromatin structure by regulation of nucleosome assembly/disassembly. This is Nucleosome assembly protein 1;3 (NAP1;3) from Oryza sativa subsp. indica (Rice).